The sequence spans 546 residues: DNA replication factor Cdt1 (546 aa).

A compositionally biased stretch (basic and acidic residues) spans 1 to 11; it reads MEQRRVTDFFA. Positions 1-23 match the PIP-box K+4 motif motif; sequence MEQRRVTDFFARRRPGPPRIAPP. Disordered regions lie at residues 1–118 and 143–165; these read MEQR…QDQD and SAQD…PCGE. Positions 28–45 are enriched in low complexity; that stretch reads RTPSPARPALRAPASATS. Thr-29 carries the post-translational modification Phosphothreonine; by MAPK8. Ser-31 carries the phosphoserine modification. A Cyclin-binding motif motif is present at residues 68–70; sequence RRL. At Ser-93 the chain carries Phosphoserine; by MAPK8. Positions 150–190 are interaction with GMNN; the sequence is SCTPEAEGRPEEPCGEKAPAYQRFHALAQPGLPGLVLPYKY. Positions 155-164 are enriched in basic and acidic residues; sequence AEGRPEEPCG. Ser-318 carries the post-translational modification Phosphoserine; by MAPK8. Ser-380 and Ser-394 each carry phosphoserine. The segment at 383–415 is disordered; the sequence is ALRSAAPSSPGSPRPALPATPPATPPAASPSAL. Pro residues predominate over residues 392 to 410; sequence PGSPRPALPATPPATPPAA. The interval 451–546 is interaction with LRWD1; that stretch reads LERLPELARV…AHQTRAEEGL (96 aa).

This sequence belongs to the Cdt1 family. In terms of assembly, interacts with GMNN; the interaction inhibits binding of the MCM complex to origins of replication. Interacts with MCM6. Interacts with CDC6; are mutually dependent on one another for loading MCM complexes onto chromatin. Interacts with PCNA. Interacts with LRWD1 during G1 phase and during mitosis. Interacts with NDC80 subunit of the NDC80 complex; leading to kinetochore localization. Interacts with GRWD1; origin binding of GRWD1 is dependent on CDT1. Interacts with KAT7. Interacts with ubiquitin-binding protein FAF1; the interaction is likely to promote CDT1 degradation. In terms of processing, two independent E3 ubiquitin ligase complexes, SCF(SKP2) and the DCX(DTL) complex, mediated CDT1 degradation in S phase. Ubiquitinated by the DCX(DTL) complex, in response to DNA damage, leading to its degradation. Ubiquitination by the DCX(DTL) complex is necessary to ensure proper cell cycle regulation and is PCNA-dependent: interacts with PCNA via its PIP-box, while the presence of the containing the 'K+4' motif in the PIP box, recruit the DCX(DTL) complex, leading to its degradation. Phosphorylation at Thr-29 by CDK2 targets CDT1 for ubiquitination by SCF(SKP2) E3 ubiquitin ligase and subsequent degradation. The interaction with GMNN protects it against ubiquitination. Deubiquitinated by USP37. Ubiquitinated and degraded by the SCF(FBXO31) complex during the G2 phase to prevent re-replication. Phosphorylation by cyclin A-dependent kinases at Thr-29 targets CDT1 for ubiquitynation by SCF(SKP2) E3 ubiquitin ligase and subsequent degradation. Phosphorylated at Thr-29 by MAPK8/JNK1, which blocks replication licensing in response to stress. Binding to GMNN is not affected by phosphorylation.

The protein localises to the nucleus. It localises to the chromosome. The protein resides in the centromere. Its subcellular location is the kinetochore. Required for both DNA replication and mitosis. DNA replication licensing factor, required for pre-replication complex assembly. Cooperates with CDC6 and the origin recognition complex (ORC) during G1 phase of the cell cycle to promote the loading of the mini-chromosome maintenance (MCM) complex onto DNA to generate pre-replication complexes (pre-RC). Required also for mitosis by promoting stable kinetochore-microtubule attachments. Potential oncogene. This chain is DNA replication factor Cdt1, found in Homo sapiens (Human).